We begin with the raw amino-acid sequence, 509 residues long: Lysine--tRNA ligase (509 aa).

Residues Glu-417 and Glu-424 each contribute to the Mg(2+) site.

This sequence belongs to the class-II aminoacyl-tRNA synthetase family. Homodimer. The cofactor is Mg(2+).

Its subcellular location is the cytoplasm. It carries out the reaction tRNA(Lys) + L-lysine + ATP = L-lysyl-tRNA(Lys) + AMP + diphosphate. The protein is Lysine--tRNA ligase of Blochmanniella pennsylvanica (strain BPEN).